A 132-amino-acid polypeptide reads, in one-letter code: Arsenate reductase 1 (132 aa).

Catalysis depends on nucleophile residues cysteine 10, cysteine 82, and cysteine 89. Intrachain disulfides connect cysteine 10-cysteine 82 and cysteine 82-cysteine 89.

The protein belongs to the low molecular weight phosphotyrosine protein phosphatase family. Thioredoxin-coupled ArsC subfamily.

It localises to the cytoplasm. It carries out the reaction arsenate + [thioredoxin]-dithiol + H(+) = arsenite + [thioredoxin]-disulfide + H2O. In terms of biological role, catalyzes the reduction of arsenate [As(V)] to arsenite [As(III)]. This is Arsenate reductase 1 from Staphylococcus epidermidis (strain ATCC 35984 / DSM 28319 / BCRC 17069 / CCUG 31568 / BM 3577 / RP62A).